The sequence spans 259 residues: UPF0246 protein PSPTO_1244 (259 aa).

It belongs to the UPF0246 family.

This is UPF0246 protein PSPTO_1244 from Pseudomonas syringae pv. tomato (strain ATCC BAA-871 / DC3000).